Here is a 372-residue protein sequence, read N- to C-terminus: L-selectin (372 aa).

A signal peptide spans 1–28 (MIFPWKCQSTQRDLWNIFKLWGWTMLCC). Residues 29 to 38 (DFLAHHGTDC) constitute a propeptide that is removed on maturation. The Extracellular portion of the chain corresponds to 39-332 (WTYHYSEKPM…FSMIKEGDYN (294 aa)). In terms of domain architecture, C-type lectin spans 55–155 (RFCRDNYTDL…ACHKLKAALC (101 aa)). 10 disulfides stabilise this stretch: Cys57-Cys155, Cys128-Cys147, Cys128-Cys160, Cys160-Cys171, Cys165-Cys180, Cys182-Cys191, Cys197-Cys241, Cys227-Cys254, Cys259-Cys303, and Cys289-Cys316. N-linked (GlcNAc...) asparagine glycosylation is found at Asn60 and Asn104. Glu118, Asn120, Glu126, Asn143, and Asp144 together coordinate Ca(2+). Residues 156 to 192 (YTASCQPWSCSGHGECVEIINNYTCNCDVGYYGPQCQ) enclose the EGF-like domain. A glycan (N-linked (GlcNAc...) asparagine) is linked at Asn177. Sushi domains follow at residues 195-256 (IQCE…TCQV) and 257-318 (IQCE…ICQK). Residues Asn216, Asn232, Asn246, and Asn271 are each glycosylated (N-linked (GlcNAc...) asparagine). The helical transmembrane segment at 333–355 (PLFIPVAVMVTAFSGLAFIIWLA) threads the bilayer. Over 356–372 (RRLKKGKKSKRSMDDPY) the chain is Cytoplasmic.

It belongs to the selectin/LECAM family. As to quaternary structure, interaction with SELPLG/PSGL1 and PODXL2 is required for promoting recruitment and rolling of leukocytes. This interaction is dependent on the sialyl Lewis X glycan modification of SELPLG and PODXL2, and tyrosine sulfation modifications of SELPLG. Sulfation on 'Tyr-51' of SELPLG is important for L-selectin binding. In terms of processing, N-glycosylated.

The protein localises to the cell membrane. In terms of biological role, calcium-dependent lectin that mediates cell adhesion by binding to glycoproteins on neighboring cells. Mediates the adherence of lymphocytes to endothelial cells of high endothelial venules in peripheral lymph nodes. Promotes initial tethering and rolling of leukocytes in endothelia. This Pan troglodytes (Chimpanzee) protein is L-selectin (SELL).